We begin with the raw amino-acid sequence, 177 residues long: MSEMATIARPYAKAAFDFAVEKGELSQWAQMLTFCSEVAKNKDVAQLLDGAVASEQLAEIFISICGEQLNEFGQNLIHVMAENGRLKVLPGVLEQFILLQHEFEKVIDADVTSAIELTEQQKADIGAKLEARLERKVKLNCSVDETLLAGVIIRAGDLVIDNSARGRLGRLSETLQS.

Belongs to the ATPase delta chain family. In terms of assembly, F-type ATPases have 2 components, F(1) - the catalytic core - and F(0) - the membrane proton channel. F(1) has five subunits: alpha(3), beta(3), gamma(1), delta(1), epsilon(1). F(0) has three main subunits: a(1), b(2) and c(10-14). The alpha and beta chains form an alternating ring which encloses part of the gamma chain. F(1) is attached to F(0) by a central stalk formed by the gamma and epsilon chains, while a peripheral stalk is formed by the delta and b chains.

The protein resides in the cell inner membrane. Functionally, f(1)F(0) ATP synthase produces ATP from ADP in the presence of a proton or sodium gradient. F-type ATPases consist of two structural domains, F(1) containing the extramembraneous catalytic core and F(0) containing the membrane proton channel, linked together by a central stalk and a peripheral stalk. During catalysis, ATP synthesis in the catalytic domain of F(1) is coupled via a rotary mechanism of the central stalk subunits to proton translocation. This protein is part of the stalk that links CF(0) to CF(1). It either transmits conformational changes from CF(0) to CF(1) or is implicated in proton conduction. This chain is ATP synthase subunit delta, found in Aliivibrio fischeri (strain MJ11) (Vibrio fischeri).